The chain runs to 254 residues: Probable glutathione transferase omega-2 (254 aa).

The GST N-terminal domain maps to 25–105 (GTIRIYNMRY…YLDDIYPEPR (81 aa)). Cys-35 (nucleophile) is an active-site residue. Glutathione contacts are provided by residues Lys-62, Val-75, and 89–90 (ES). Residues 110-239 (DHYEKVQQKL…SQPTETAVEF (130 aa)) enclose the GST C-terminal domain.

The protein belongs to the GST superfamily. Omega family.

The catalysed reaction is RX + glutathione = an S-substituted glutathione + a halide anion + H(+). It carries out the reaction L-dehydroascorbate + 2 glutathione = glutathione disulfide + L-ascorbate. The enzyme catalyses methylarsonate + 2 glutathione + H(+) = methylarsonous acid + glutathione disulfide + H2O. Exhibits glutathione-dependent thiol transferase activity. Has dehydroascorbate reductase activity and may contribute to the recycling of ascorbic acid. Participates in the biotransformation of inorganic arsenic and reduces monomethylarsonic acid (MMA). This chain is Probable glutathione transferase omega-2 (gsto-2), found in Caenorhabditis elegans.